Here is a 490-residue protein sequence, read N- to C-terminus: Betaine aldehyde dehydrogenase (490 aa).

K(+)-binding residues include isoleucine 27 and aspartate 93. NAD(+) is bound at residue 150 to 152; the sequence is GAW. The Charge relay system role is filled by lysine 162. 176–179 provides a ligand contact to NAD(+); the sequence is KPSE. Valine 180 contacts K(+). 230 to 233 serves as a coordination point for NAD(+); it reads GTTT. Residue leucine 246 coordinates K(+). Glutamate 252 (proton acceptor) is an active-site residue. Glycine 254, cysteine 286, and glutamate 387 together coordinate NAD(+). Cysteine 286 serves as the catalytic Nucleophile. Position 286 is a cysteine sulfenic acid (-SOH) (cysteine 286). K(+)-binding residues include lysine 457 and glycine 460. The Charge relay system role is filled by glutamate 464.

The protein belongs to the aldehyde dehydrogenase family. As to quaternary structure, dimer of dimers. Requires K(+) as cofactor.

It catalyses the reaction betaine aldehyde + NAD(+) + H2O = glycine betaine + NADH + 2 H(+). The protein operates within amine and polyamine biosynthesis; betaine biosynthesis via choline pathway; betaine from betaine aldehyde: step 1/1. Functionally, involved in the biosynthesis of the osmoprotectant glycine betaine. Catalyzes the irreversible oxidation of betaine aldehyde to the corresponding acid. The sequence is that of Betaine aldehyde dehydrogenase from Pseudomonas entomophila (strain L48).